We begin with the raw amino-acid sequence, 485 residues long: Cysteine--tRNA ligase (485 aa).

Position 29 (Cys29) interacts with Zn(2+). A 'HIGH' region motif is present at residues 31 to 41 (ATVQGMPHVGH). Positions 174–198 (QRVEDMQDAPDADPRGKRDPHDFAL) are disordered. Over residues 185 to 197 (ADPRGKRDPHDFA) the composition is skewed to basic and acidic residues. 3 residues coordinate Zn(2+): Cys227, His252, and Glu256. The short motif at 283–287 (KMSKS) is the 'KMSKS' region element. Lys286 contributes to the ATP binding site.

The protein belongs to the class-I aminoacyl-tRNA synthetase family. As to quaternary structure, monomer. Zn(2+) is required as a cofactor.

The protein resides in the cytoplasm. The enzyme catalyses tRNA(Cys) + L-cysteine + ATP = L-cysteinyl-tRNA(Cys) + AMP + diphosphate. This Micrococcus luteus (strain ATCC 4698 / DSM 20030 / JCM 1464 / CCM 169 / CCUG 5858 / IAM 1056 / NBRC 3333 / NCIMB 9278 / NCTC 2665 / VKM Ac-2230) (Micrococcus lysodeikticus) protein is Cysteine--tRNA ligase.